The sequence spans 239 residues: Probable transcriptional regulatory protein Tcr_1104 (239 aa).

Belongs to the TACO1 family.

The protein localises to the cytoplasm. In Hydrogenovibrio crunogenus (strain DSM 25203 / XCL-2) (Thiomicrospira crunogena), this protein is Probable transcriptional regulatory protein Tcr_1104.